The following is a 296-amino-acid chain: Elongation factor Ts (296 aa).

The interval 82-85 (TDFV) is involved in Mg(2+) ion dislocation from EF-Tu.

The protein belongs to the EF-Ts family.

The protein resides in the cytoplasm. Functionally, associates with the EF-Tu.GDP complex and induces the exchange of GDP to GTP. It remains bound to the aminoacyl-tRNA.EF-Tu.GTP complex up to the GTP hydrolysis stage on the ribosome. The polypeptide is Elongation factor Ts (Aromatoleum aromaticum (strain DSM 19018 / LMG 30748 / EbN1) (Azoarcus sp. (strain EbN1))).